A 533-amino-acid polypeptide reads, in one-letter code: DEAD-box ATP-dependent RNA helicase CshA (533 aa).

The Q motif motif lies at 2 to 30; the sequence is TTFRELGLSDSLLQSVESMGFEEATPIQA. The Helicase ATP-binding domain occupies 33 to 203; sequence IPHALQGKDI…ERFMTEPQHI (171 aa). 46 to 53 contacts ATP; that stretch reads AQTGTGKT. The DEAD box motif lies at 151–154; that stretch reads DEAD. In terms of domain architecture, Helicase C-terminal spans 214 to 374; sequence NIQQFYLEVQ…RMDAPTLDEA (161 aa). The segment at 428–533 is disordered; the sequence is TTPIALTSEP…ERKHHSRPQA (106 aa). The segment covering 458–512 has biased composition (basic and acidic residues); sequence DGNRNRSRDGRGGGDGRNRDRNRDGRNRDGNRDRNRDGNRDRNRDGGSRGRRGEG. A compositionally biased stretch (basic residues) spans 524-533; the sequence is ERKHHSRPQA.

It belongs to the DEAD box helicase family. CshA subfamily. In terms of assembly, oligomerizes, may be a member of the RNA degradosome.

It is found in the cytoplasm. The catalysed reaction is ATP + H2O = ADP + phosphate + H(+). DEAD-box RNA helicase possibly involved in RNA degradation. May work in conjunction with the cold shock proteins to ensure proper initiation of transcription at low and optimal temperatures. Unwinds dsRNA in both 5'- and 3'-directions and shows RNA-dependent ATPase activity. Probably has a somewhat redundant function with cshB, as cshA can partially complement the growth effects of a cshB deletion. Plays a role in adaptation to cold, oxididant and pH stress. This Bacillus cereus (strain ATCC 14579 / DSM 31 / CCUG 7414 / JCM 2152 / NBRC 15305 / NCIMB 9373 / NCTC 2599 / NRRL B-3711) protein is DEAD-box ATP-dependent RNA helicase CshA.